The primary structure comprises 220 residues: Phosphopantothenoylcysteine decarboxylase (220 aa).

Residues 29-31 (GSV) and 54-56 (TKA) contribute to the FMN site. The active-site Proton donor is H91. FMN contacts are provided by residues 107–110 (SANT) and A141. The N-[(R)-4-phosphopantothenoyl]-L-cysteine site is built by N143, R173, and A175. C176 acts as the Proton donor in catalysis. Residue M184 participates in N-[(R)-4-phosphopantothenoyl]-L-cysteine binding.

The protein belongs to the HFCD (homooligomeric flavin containing Cys decarboxylase) superfamily. In terms of assembly, forms homotrimers. Interacts with HIP1. Interacts with HD1 in the dark. Requires FMN as cofactor. Expressed in root meristem, shoot apical meristem (SAM), intercalary meristem, floral meristem, embryo and tip of the coleoptile before true leaf emergence.

Its subcellular location is the nucleus. It carries out the reaction N-[(R)-4-phosphopantothenoyl]-L-cysteine + H(+) = (R)-4'-phosphopantetheine + CO2. The protein operates within cofactor biosynthesis; coenzyme A biosynthesis; CoA from (R)-pantothenate: step 3/5. Catalyzes the decarboxylation of 4'-phosphopantothenoylcysteine to 4'-phosphopantetheine, a key step in coenzyme A biosynthesis. Involved in salt and osmotic tolerance, and light-regulated plant growth. Trimerization of HAL3 recruits and activates the E3 ubiquitin-protein ligase HIP1, which leads to the degradation of cell cycle suppressors, resulting in enhancement of cell division and plant growth. HAL3 function in cell division seems to be independent from its PPC decarboxylase activity. Acts as a positive regulator of flowering by binding to HD1 in the dark. The protein is Phosphopantothenoylcysteine decarboxylase of Oryza sativa subsp. japonica (Rice).